We begin with the raw amino-acid sequence, 284 residues long: L-ribulose-5-phosphate 3-epimerase UlaE (284 aa).

The protein belongs to the L-ribulose-5-phosphate 3-epimerase family.

It catalyses the reaction L-ribulose 5-phosphate = L-xylulose 5-phosphate. It functions in the pathway cofactor degradation; L-ascorbate degradation; D-xylulose 5-phosphate from L-ascorbate: step 3/4. Functionally, catalyzes the isomerization of L-xylulose-5-phosphate to L-ribulose-5-phosphate. Is involved in the anaerobic L-ascorbate utilization. This Shigella boydii serotype 18 (strain CDC 3083-94 / BS512) protein is L-ribulose-5-phosphate 3-epimerase UlaE.